Consider the following 150-residue polypeptide: Aspartate 1-decarboxylase (150 aa).

Ser24 functions as the Schiff-base intermediate with substrate; via pyruvic acid in the catalytic mechanism. Ser24 carries the post-translational modification Pyruvic acid (Ser). Thr56 serves as a coordination point for substrate. The active-site Proton donor is Tyr57. 72 to 74 contacts substrate; sequence GAA.

The protein belongs to the PanD family. In terms of assembly, heterooctamer of four alpha and four beta subunits. Pyruvate is required as a cofactor. Post-translationally, is synthesized initially as an inactive proenzyme, which is activated by self-cleavage at a specific serine bond to produce a beta-subunit with a hydroxyl group at its C-terminus and an alpha-subunit with a pyruvoyl group at its N-terminus.

The protein resides in the cytoplasm. The enzyme catalyses L-aspartate + H(+) = beta-alanine + CO2. It participates in cofactor biosynthesis; (R)-pantothenate biosynthesis; beta-alanine from L-aspartate: step 1/1. Catalyzes the pyruvoyl-dependent decarboxylation of aspartate to produce beta-alanine. This Beijerinckia indica subsp. indica (strain ATCC 9039 / DSM 1715 / NCIMB 8712) protein is Aspartate 1-decarboxylase.